Here is a 972-residue protein sequence, read N- to C-terminus: MDTDLYDEFGNYIGPELDSDEDDDELGRETKDLDEVDEDEDDDDVGDHDEDHPGMEVVLHEDKKYYPTAEEVYGPEVETIVQEEDTQPLTEPIIKPVKTKKFTLMEQTLPVTVYEMDSLADLMDNSELIRNVTLCGHLHHGKTCFVDCLIEQTHPEIRKRYDQDLCYTDILFTEQERGVGIKSTPVTVVLPDTKGKSYLFNIMDTPGHVNFSDEVTAGLRISDGVVLFIDAAEGVMLNTERLIKHAVQERLAVTVCINKIDRLILELKLPPTDAYYKLRHIVDEVNGLISMYSTDENLILSPLLGNVCFSSSQYSICFTLGSFAKIYADTFGDINYQEFAKRLWGDIYFNPKTRKFTKKAPTSSSQRSFVEFILEPLYKILAQVVGDVDTSLPRTLDELGIHLTKEELKLNIRPLLRLVCKKFFGEFTGFVDMCVQHIPSPKVGAKPKIEHTYTGGVDSDLGEAMSDCDPDGPLMCHTTKMYSTDDGVQFHAFGRVLSGTIHAGQPVKVLGENYTLEDEEDSQICTVGRLWISVARYHIEVNRVPAGNWVLIEGVDQPIVKTATITEPRGNEEAQIFRPLKFNTTSVIKIAVEPVNPSELPKMLDGLRKVNKSYPSLTTKVEESGEHVILGTGELYLDCVMHDLRKMYSEIDIKVADPVVTFCETVVETSSLKCFAETPNKKNKITMIAEPLEKGLAEDIENEVVQITWNRKKLGEFFQTKYDWDLLAARSIWAFGPDATGPNILVDDTLPSEVDKALLGSVKDSIVQGFQWGTREGPLCDELIRNVKFKILDAVVAQEPLHRGGGQIIPTARRVVYSAFLMATPRLMEPYYFVEVQAPADCVSAVYTVLARRRGHVTQDAPIPGSPLYTIKAFIPAIDSFGFETDLRTHTQGQAFSLSVFHHWQIVPGDPLDKSIVIRPLEPQPAPHLAREFMIKTRRRKGLSEDVSISKFFDDPMLLELAKQDVVLNYPM.

Residue M1 is modified to N-acetylmethionine. A disordered region spans residues 1-53 (MDTDLYDEFGNYIGPELDSDEDDDELGRETKDLDEVDEDEDDDDVGDHDEDHP). Acidic residues-rich tracts occupy residues 17–26 (LDSDEDDDEL) and 34–48 (DEVD…VGDH). Phosphoserine is present on S19. K64 is covalently cross-linked (Glycyl lysine isopeptide (Lys-Gly) (interchain with G-Cter in SUMO1); alternate). K64 is covalently cross-linked (Glycyl lysine isopeptide (Lys-Gly) (interchain with G-Cter in SUMO2); alternate). Residue T86 is modified to Phosphothreonine. One can recognise a tr-type G domain in the interval 127 to 409 (ELIRNVTLCG…GIHLTKEELK (283 aa)). GTP is bound by residues 136–143 (GHLHHGKT), 204–208 (DTPGH), and 258–261 (NKID).

Belongs to the TRAFAC class translation factor GTPase superfamily. Classic translation factor GTPase family. EF-G/EF-2 subfamily. Component of the U5 snRNP and the U4/U6-U5 tri-snRNP complex, a building block of the spliceosome. The U4/U6-U5 tri-snRNP complex is composed of the U4, U6 and U5 snRNAs and at least PRPF3, PRPF4, PRPF6, PRPF8, PRPF31, SNRNP200, TXNL4A, SNRNP40, DDX23, CD2BP2, PPIH, SNU13, EFTUD2, SART1 and USP39. Component of the pre-catalytic, catalytic and post-catalytic spliceosome complexes. Component of the minor spliceosome, which splices U12-type introns. Within this complex, interacts with CRIPT. Interacts with ERBB4 and PRPF8. Interacts with PIH1D1. Interacts with RPAP3 and URI1 in a ZNHIT2-dependent manner. Interacts with NRDE2. Interacts with FAM50A. Interacts with UBL5.

The protein localises to the nucleus. Functionally, required for pre-mRNA splicing as component of the spliceosome, including pre-catalytic, catalytic and post-catalytic spliceosomal complexes. Component of the U5 snRNP and the U4/U6-U5 tri-snRNP complex, a building block of the spliceosome. As a component of the minor spliceosome, involved in the splicing of U12-type introns in pre-mRNAs. The polypeptide is 116 kDa U5 small nuclear ribonucleoprotein component (EFTUD2) (Bos taurus (Bovine)).